The sequence spans 388 residues: Aldolase vrtJ (388 aa).

An N6-(pyridoxal phosphate)lysine modification is found at K241.

This sequence belongs to the threonine aldolase family. Pyridoxal 5'-phosphate serves as cofactor.

The protein operates within secondary metabolite biosynthesis; terpenoid biosynthesis. In terms of biological role, aldolase; part of the gene cluster that mediates the biosynthesis of viridicatumtoxin, a tetracycline-like fungal meroterpenoid with a unique, fused spirobicyclic ring system. The first step of the pathway is the production of the malonamoyl-CoA starter unit for the polyketide synthase vrtA. The aldolase vrtJ may be involved in the synthesis of the malonamate substrate for malonamoyl-CoA synthetase vrtB. The polyketide synthase vrtA then may utilize the malonamoyl-CoA starter unit, followed by sequential condensation of eight malonyl-CoA units to form the polyketide backbone. The cyclization of the last ring could be mediated by the lactamase-like protein vrtG. The proposed post-PKS tailoring steps are a hydroxylation at C5 catalyzed the cytochrome P450 monooxygenase vrtE, a hydroxylation at C12a catalyzed by VrtH and/or VrtI, and an O-methylation by the O-methyltransferase vrtF. VrtC is then proposed to catalyze the transfer of a geranyl group synthesized by vrtD to the aromatic C ring of the tetracyclic polyketide intermediate of viridicatumtoxin to yield previridicatumtoxin. Finally, the cytochrome P450 monooxygenase vrtK catalyzes the spirocyclization of the geranyl moiety of previridicatumtoxin to afford viridicatumtoxin. The polypeptide is Aldolase vrtJ (Penicillium aethiopicum).